Here is a 416-residue protein sequence, read N- to C-terminus: Adenylosuccinate synthetase (416 aa).

GTP-binding positions include 13–19 and 41–43; these read GDEGKGK and GHT. The active-site Proton acceptor is the Asp-14. The Mg(2+) site is built by Asp-14 and Gly-41. IMP-binding positions include 14–17, 39–42, Thr-126, Arg-140, Gln-220, Thr-235, and Arg-299; these read DEGK and NAGH. Residue His-42 is the Proton donor of the active site. Position 295–301 (295–301) interacts with substrate; the sequence is TTTGRRR. GTP-binding positions include Arg-301, 327 to 329, and 405 to 407; these read KLD and STS.

It belongs to the adenylosuccinate synthetase family. As to quaternary structure, homodimer. Mg(2+) serves as cofactor.

It is found in the cytoplasm. The catalysed reaction is IMP + L-aspartate + GTP = N(6)-(1,2-dicarboxyethyl)-AMP + GDP + phosphate + 2 H(+). It functions in the pathway purine metabolism; AMP biosynthesis via de novo pathway; AMP from IMP: step 1/2. In terms of biological role, plays an important role in the de novo pathway of purine nucleotide biosynthesis. Catalyzes the first committed step in the biosynthesis of AMP from IMP. In Campylobacter curvus (strain 525.92), this protein is Adenylosuccinate synthetase.